We begin with the raw amino-acid sequence, 201 residues long: Adenylyl-sulfate kinase (201 aa).

Residue 35 to 42 participates in ATP binding; that stretch reads GLSGSGKS. Ser-109 serves as the catalytic Phosphoserine intermediate.

Belongs to the APS kinase family.

It catalyses the reaction adenosine 5'-phosphosulfate + ATP = 3'-phosphoadenylyl sulfate + ADP + H(+). Its pathway is sulfur metabolism; hydrogen sulfide biosynthesis; sulfite from sulfate: step 2/3. In terms of biological role, catalyzes the synthesis of activated sulfate. In Klebsiella pneumoniae (strain 342), this protein is Adenylyl-sulfate kinase.